The primary structure comprises 382 residues: Pyrimidine monooxygenase RutA (382 aa).

FMN is bound by residues 68-69 (IK), asparagine 134, glutamate 143, 159-160 (RY), and serine 209.

The protein belongs to the NtaA/SnaA/DszA monooxygenase family. RutA subfamily.

The enzyme catalyses uracil + FMNH2 + NADH + O2 = (Z)-3-ureidoacrylate + FMN + NAD(+) + H2O + H(+). It catalyses the reaction thymine + FMNH2 + NADH + O2 = (Z)-2-methylureidoacrylate + FMN + NAD(+) + H2O + H(+). In terms of biological role, catalyzes the pyrimidine ring opening between N-3 and C-4 by an unusual flavin hydroperoxide-catalyzed mechanism, adding oxygen atoms in the process to yield ureidoacrylate peracid, that immediately reacts with FMN forming ureidoacrylate and FMN-N(5)-oxide. The FMN-N(5)-oxide reacts spontaneously with NADH to produce FMN. Requires the flavin reductase RutF to regenerate FMN in vivo. The polypeptide is Pyrimidine monooxygenase RutA (Escherichia coli O45:K1 (strain S88 / ExPEC)).